Reading from the N-terminus, the 93-residue chain is Small ribosomal subunit protein uS19 (93 aa).

It belongs to the universal ribosomal protein uS19 family.

In terms of biological role, protein S19 forms a complex with S13 that binds strongly to the 16S ribosomal RNA. The chain is Small ribosomal subunit protein uS19 from Nitratidesulfovibrio vulgaris (strain ATCC 29579 / DSM 644 / CCUG 34227 / NCIMB 8303 / VKM B-1760 / Hildenborough) (Desulfovibrio vulgaris).